Here is a 473-residue protein sequence, read N- to C-terminus: Iron transporter SMF3 (473 aa).

The next 2 membrane-spanning stretches (helical) occupy residues 14–34 (FIGP…YATS) and 44–64 (TLLF…CLCV). The N-linked (GlcNAc...) asparagine glycan is linked to Asn-87. A run of 9 helical transmembrane segments spans residues 97 to 117 (AIIA…QILF), 119 to 139 (IPLT…LMFY), 152 to 172 (FEFG…LELF), 198 to 218 (ALYI…LYLG), 257 to 277 (LIIS…IVAG), 297 to 317 (LLVH…MLCS), 352 to 372 (LIAI…GISD), 373 to 393 (ILNF…APLI), and 448 to 468 (VFVW…YLLG).

Belongs to the NRAMP family.

It is found in the vacuole membrane. The protein resides in the endoplasmic reticulum membrane. Functionally, has a role in controlling the cellular iron ion levels. Mobilizes vacuolar stores of iron in conditions of low iron levels. In Saccharomyces cerevisiae (strain ATCC 204508 / S288c) (Baker's yeast), this protein is Iron transporter SMF3 (SMF3).